The chain runs to 587 residues: Aspartate--tRNA ligase (587 aa).

Position 173 (E173) interacts with L-aspartate. The segment at 197–200 (QTLK) is aspartate. R219 contributes to the L-aspartate binding site. ATP contacts are provided by residues 219–221 (RDE) and Q228. Residue H446 coordinates L-aspartate. An ATP-binding site is contributed by E480. Position 487 (R487) interacts with L-aspartate. 532–535 (GLDR) lines the ATP pocket.

It belongs to the class-II aminoacyl-tRNA synthetase family. Type 1 subfamily. In terms of assembly, homodimer.

It localises to the cytoplasm. It catalyses the reaction tRNA(Asp) + L-aspartate + ATP = L-aspartyl-tRNA(Asp) + AMP + diphosphate. In terms of biological role, catalyzes the attachment of L-aspartate to tRNA(Asp) in a two-step reaction: L-aspartate is first activated by ATP to form Asp-AMP and then transferred to the acceptor end of tRNA(Asp). This chain is Aspartate--tRNA ligase, found in Bacteroides thetaiotaomicron (strain ATCC 29148 / DSM 2079 / JCM 5827 / CCUG 10774 / NCTC 10582 / VPI-5482 / E50).